Reading from the N-terminus, the 73-residue chain is Translation initiation factor IF-1 (73 aa).

Residues 1–73 (MAKKDGAIEI…TRGRIVYRYK (73 aa)) enclose the S1-like domain.

The protein belongs to the IF-1 family. As to quaternary structure, component of the 30S ribosomal translation pre-initiation complex which assembles on the 30S ribosome in the order IF-2 and IF-3, IF-1 and N-formylmethionyl-tRNA(fMet); mRNA recruitment can occur at any time during PIC assembly.

Its subcellular location is the cytoplasm. Its function is as follows. One of the essential components for the initiation of protein synthesis. Stabilizes the binding of IF-2 and IF-3 on the 30S subunit to which N-formylmethionyl-tRNA(fMet) subsequently binds. Helps modulate mRNA selection, yielding the 30S pre-initiation complex (PIC). Upon addition of the 50S ribosomal subunit IF-1, IF-2 and IF-3 are released leaving the mature 70S translation initiation complex. The sequence is that of Translation initiation factor IF-1 from Thermobifida fusca (strain YX).